A 388-amino-acid polypeptide reads, in one-letter code: uncharacterized protein (388 aa).

Residues 68 to 96 (KVDRMSEEEERMAIATRKAKEVAKELSET) adopt a coiled-coil conformation. A disordered region spans residues 162–388 (GSHPLVREFN…PPQQDWFDSV (227 aa)). Basic and acidic residues-rich tracts occupy residues 166–176 (LVREFNGEKPP) and 196–208 (ATDK…QSDK). Residues 233–251 (GVKHQHAIRRDDRHRHGMR) show a composition bias toward basic residues. Composition is skewed to low complexity over residues 265-279 (QQQQ…SRGQ) and 293-346 (QRRP…QRPA).

This is an uncharacterized protein from Frog virus 3 (isolate Goorha) (FV-3).